Here is a 95-residue protein sequence, read N- to C-terminus: Small ribosomal subunit protein uS19 (95 aa).

The disordered stretch occupies residues 73-95; it reads EFSPTRTYRGHGADKNAKGSKKK.

This sequence belongs to the universal ribosomal protein uS19 family.

Functionally, protein S19 forms a complex with S13 that binds strongly to the 16S ribosomal RNA. This Deinococcus geothermalis (strain DSM 11300 / CIP 105573 / AG-3a) protein is Small ribosomal subunit protein uS19.